Here is a 189-residue protein sequence, read N- to C-terminus: Peptidyl-tRNA hydrolase (189 aa).

Y14 contacts tRNA. Catalysis depends on H19, which acts as the Proton acceptor. F64, N66, and N112 together coordinate tRNA.

This sequence belongs to the PTH family. In terms of assembly, monomer.

The protein resides in the cytoplasm. It catalyses the reaction an N-acyl-L-alpha-aminoacyl-tRNA + H2O = an N-acyl-L-amino acid + a tRNA + H(+). Functionally, hydrolyzes ribosome-free peptidyl-tRNAs (with 1 or more amino acids incorporated), which drop off the ribosome during protein synthesis, or as a result of ribosome stalling. Its function is as follows. Catalyzes the release of premature peptidyl moieties from peptidyl-tRNA molecules trapped in stalled 50S ribosomal subunits, and thus maintains levels of free tRNAs and 50S ribosomes. This Erythrobacter litoralis (strain HTCC2594) protein is Peptidyl-tRNA hydrolase.